We begin with the raw amino-acid sequence, 92 residues long: UPF0250 protein PD_0532 (92 aa).

Belongs to the UPF0250 family.

The protein is UPF0250 protein PD_0532 of Xylella fastidiosa (strain Temecula1 / ATCC 700964).